Consider the following 249-residue polypeptide: MVRYKATISYDGTLFSGFQRQRHLRTVQEEIEKTLYKLNNGTKIIIHGAGRTDAGVHAYGQVIHFDLPQEQEVEKLRFALDTQTPEDIDVVNIEKVADDFHCRYQKHLKTYEFLVDNGRPKNPMMRHYTTHYPYTLNIKLMQDAINGLVGTHDFTGFTAAGTSVQNKVRTITKATVSRDEKTDFLVFTFSGNGFLYKQVRNMVGTLLKIGNGQMPVEQVKVILSSKNRQLAGPTISGNGLYLKEICYEN.

The Nucleophile role is filled by D53. Y111 serves as a coordination point for substrate.

This sequence belongs to the tRNA pseudouridine synthase TruA family. As to quaternary structure, homodimer.

It carries out the reaction uridine(38/39/40) in tRNA = pseudouridine(38/39/40) in tRNA. Functionally, formation of pseudouridine at positions 38, 39 and 40 in the anticodon stem and loop of transfer RNAs. This chain is tRNA pseudouridine synthase A, found in Streptococcus pyogenes serotype M3 (strain ATCC BAA-595 / MGAS315).